Consider the following 335-residue polypeptide: Probable cytosolic iron-sulfur protein assembly protein Ciao1 (335 aa).

WD repeat units follow at residues 12–51 (GHKG…WSTK), 57–96 (GHKR…FECN), 101–140 (GHEN…EFEC), 146–185 (SHTQ…NDWD), 192–231 (SHTS…NSAG), 250–289 (QHSR…KPDE), and 301–335 (AHDQ…KVTE).

It belongs to the WD repeat CIA1 family.

Its function is as follows. Essential component of the cytosolic iron-sulfur (Fe/S) protein assembly machinery. Required for the maturation of extramitochondrial Fe/S proteins. This is Probable cytosolic iron-sulfur protein assembly protein Ciao1 from Drosophila erecta (Fruit fly).